Consider the following 254-residue polypeptide: Imidazole glycerol phosphate synthase subunit HisF (254 aa).

Catalysis depends on residues Asp11 and Asp130.

Belongs to the HisA/HisF family. In terms of assembly, heterodimer of HisH and HisF.

The protein localises to the cytoplasm. It catalyses the reaction 5-[(5-phospho-1-deoxy-D-ribulos-1-ylimino)methylamino]-1-(5-phospho-beta-D-ribosyl)imidazole-4-carboxamide + L-glutamine = D-erythro-1-(imidazol-4-yl)glycerol 3-phosphate + 5-amino-1-(5-phospho-beta-D-ribosyl)imidazole-4-carboxamide + L-glutamate + H(+). It participates in amino-acid biosynthesis; L-histidine biosynthesis; L-histidine from 5-phospho-alpha-D-ribose 1-diphosphate: step 5/9. Functionally, IGPS catalyzes the conversion of PRFAR and glutamine to IGP, AICAR and glutamate. The HisF subunit catalyzes the cyclization activity that produces IGP and AICAR from PRFAR using the ammonia provided by the HisH subunit. The polypeptide is Imidazole glycerol phosphate synthase subunit HisF (Chromobacterium violaceum (strain ATCC 12472 / DSM 30191 / JCM 1249 / CCUG 213 / NBRC 12614 / NCIMB 9131 / NCTC 9757 / MK)).